We begin with the raw amino-acid sequence, 260 residues long: tRNA pseudouridine synthase A (260 aa).

Aspartate 60 (nucleophile) is an active-site residue. Tyrosine 118 is a substrate binding site.

Belongs to the tRNA pseudouridine synthase TruA family. Homodimer.

It carries out the reaction uridine(38/39/40) in tRNA = pseudouridine(38/39/40) in tRNA. In terms of biological role, formation of pseudouridine at positions 38, 39 and 40 in the anticodon stem and loop of transfer RNAs. This is tRNA pseudouridine synthase A from Leuconostoc citreum (strain KM20).